A 193-amino-acid chain; its full sequence is dTTP/UTP pyrophosphatase (193 aa).

Asp-70 acts as the Proton acceptor in catalysis.

Belongs to the Maf family. YhdE subfamily. It depends on a divalent metal cation as a cofactor.

It is found in the cytoplasm. It catalyses the reaction dTTP + H2O = dTMP + diphosphate + H(+). The enzyme catalyses UTP + H2O = UMP + diphosphate + H(+). Nucleoside triphosphate pyrophosphatase that hydrolyzes dTTP and UTP. May have a dual role in cell division arrest and in preventing the incorporation of modified nucleotides into cellular nucleic acids. The protein is dTTP/UTP pyrophosphatase of Ruminiclostridium cellulolyticum (strain ATCC 35319 / DSM 5812 / JCM 6584 / H10) (Clostridium cellulolyticum).